Here is a 251-residue protein sequence, read N- to C-terminus: ATP synthase subunit a (251 aa).

Transmembrane regions (helical) follow at residues 34–54 (VFLT…AASS), 93–113 (FVGT…LVPF), 130–150 (INTT…AGFS), 195–215 (LVVG…VMAL), and 216–236 (GLFT…AYIG).

This sequence belongs to the ATPase A chain family. In terms of assembly, F-type ATPases have 2 components, CF(1) - the catalytic core - and CF(0) - the membrane proton channel. CF(1) has five subunits: alpha(3), beta(3), gamma(1), delta(1), epsilon(1). CF(0) has four main subunits: a, b, b' and c.

Its subcellular location is the cellular thylakoid membrane. Functionally, key component of the proton channel; it plays a direct role in the translocation of protons across the membrane. The sequence is that of ATP synthase subunit a from Trichormus variabilis (strain ATCC 29413 / PCC 7937) (Anabaena variabilis).